The sequence spans 172 residues: Ribosome maturation factor RimM (172 aa).

Residues 94–167 (ENEFYLFQLK…FIKVELLPGM (74 aa)) enclose the PRC barrel domain.

It belongs to the RimM family. In terms of assembly, binds ribosomal protein uS19.

It is found in the cytoplasm. Functionally, an accessory protein needed during the final step in the assembly of 30S ribosomal subunit, possibly for assembly of the head region. Essential for efficient processing of 16S rRNA. May be needed both before and after RbfA during the maturation of 16S rRNA. It has affinity for free ribosomal 30S subunits but not for 70S ribosomes. The sequence is that of Ribosome maturation factor RimM from Carboxydothermus hydrogenoformans (strain ATCC BAA-161 / DSM 6008 / Z-2901).